The following is a 141-amino-acid chain: MAIERTLSIIKPDAVAKNVIGQIYARFEAAGLKIVAARMIHLSRAEAEQFYAVHKERPFFKDLVDFMISGPVMVQALEGENAVLKNRELMGATDPKKAAPGTIRADFADSIDANAVHGSDAAETAQVEVAFFFPGLNIYSR.

ATP is bound by residues K11, F59, R87, T93, R104, and N114. H117 functions as the Pros-phosphohistidine intermediate in the catalytic mechanism.

The protein belongs to the NDK family. As to quaternary structure, homotetramer. The cofactor is Mg(2+).

The protein localises to the cytoplasm. The catalysed reaction is a 2'-deoxyribonucleoside 5'-diphosphate + ATP = a 2'-deoxyribonucleoside 5'-triphosphate + ADP. It carries out the reaction a ribonucleoside 5'-diphosphate + ATP = a ribonucleoside 5'-triphosphate + ADP. Major role in the synthesis of nucleoside triphosphates other than ATP. The ATP gamma phosphate is transferred to the NDP beta phosphate via a ping-pong mechanism, using a phosphorylated active-site intermediate. The protein is Nucleoside diphosphate kinase of Acidovorax ebreus (strain TPSY) (Diaphorobacter sp. (strain TPSY)).